The primary structure comprises 749 residues: Transcription factor RFX3 (749 aa).

Positions 183 to 258 (HLQWLLDNYE…YHYYGIRVKP (76 aa)) form a DNA-binding region, RFX-type winged-helix. Positions 663-699 (VSPGNLDKDEGSEVESEMDEELDDSSEPQAKREKTEL) are disordered. Residues 674–688 (SEVESEMDEELDDSS) are compositionally biased toward acidic residues.

Belongs to the RFX family. In terms of assembly, heterodimer; heterodimerizes with RFX1 and RFX2, and RFX6.

It is found in the nucleus. Transcription factor required for ciliogenesis and islet cell differentiation during endocrine pancreas development. Essential for the differentiation of nodal monocilia and left-right asymmetry specification during embryogenesis. Required for the biogenesis of motile cilia by governing growth and beating efficiency of motile cells. Also required for ciliated ependymal cell differentiation. Regulates the expression of genes involved in ciliary assembly (DYNC2LI1, FOXJ1 and BBS4) and genes involved in ciliary motility (DNAH11, DNAH9 and DNAH5). Together with RFX6, participates in the differentiation of 4 of the 5 islet cell types during endocrine pancreas development, with the exception of pancreatic PP (polypeptide-producing) cells. Regulates transcription by forming a heterodimer with another RFX protein and binding to the X-box in the promoter of target genes. Represses transcription of MAP1A in non-neuronal cells but not in neuronal cells. This chain is Transcription factor RFX3 (RFX3), found in Homo sapiens (Human).